We begin with the raw amino-acid sequence, 500 residues long: Glycerol kinase (500 aa).

Residue Thr-15 coordinates ADP. Residues Thr-15, Thr-16, and Ser-17 each coordinate ATP. Thr-15 is a binding site for sn-glycerol 3-phosphate. Arg-19 is a binding site for ADP. Positions 85, 86, 137, and 245 each coordinate sn-glycerol 3-phosphate. 5 residues coordinate glycerol: Arg-85, Glu-86, Tyr-137, Asp-245, and Gln-246. ADP-binding residues include Thr-267 and Gly-310. 4 residues coordinate ATP: Thr-267, Gly-310, Gln-314, and Gly-411. Gly-411 and Asn-415 together coordinate ADP.

The protein belongs to the FGGY kinase family.

It catalyses the reaction glycerol + ATP = sn-glycerol 3-phosphate + ADP + H(+). Its pathway is polyol metabolism; glycerol degradation via glycerol kinase pathway; sn-glycerol 3-phosphate from glycerol: step 1/1. With respect to regulation, inhibited by fructose 1,6-bisphosphate (FBP). Functionally, key enzyme in the regulation of glycerol uptake and metabolism. Catalyzes the phosphorylation of glycerol to yield sn-glycerol 3-phosphate. In Aeromonas salmonicida (strain A449), this protein is Glycerol kinase.